The primary structure comprises 191 residues: Molybdenum cofactor guanylyltransferase (191 aa).

Residues 13–15 (LAG), K26, D72, and D102 contribute to the GTP site. Residue D102 participates in Mg(2+) binding.

The protein belongs to the MobA family. Monomer. The cofactor is Mg(2+).

It is found in the cytoplasm. The enzyme catalyses Mo-molybdopterin + GTP + H(+) = Mo-molybdopterin guanine dinucleotide + diphosphate. In terms of biological role, transfers a GMP moiety from GTP to Mo-molybdopterin (Mo-MPT) cofactor (Moco or molybdenum cofactor) to form Mo-molybdopterin guanine dinucleotide (Mo-MGD) cofactor. The polypeptide is Molybdenum cofactor guanylyltransferase (Pseudomonas putida (strain GB-1)).